A 184-amino-acid polypeptide reads, in one-letter code: Endoribonuclease YbeY (184 aa).

Zn(2+)-binding residues include His146, His150, and His156.

This sequence belongs to the endoribonuclease YbeY family. Zn(2+) serves as cofactor.

It localises to the cytoplasm. Single strand-specific metallo-endoribonuclease involved in late-stage 70S ribosome quality control and in maturation of the 3' terminus of the 16S rRNA. This is Endoribonuclease YbeY from Nostoc sp. (strain PCC 7120 / SAG 25.82 / UTEX 2576).